We begin with the raw amino-acid sequence, 573 residues long: Putative ATP-dependent RNA helicase R563 (573 aa).

A Helicase ATP-binding domain is found at 57 to 233 (INPKTPYKGL…ALTMNLLVRN (177 aa)). 70–77 (HRIGAGKT) provides a ligand contact to ATP. The DEAH box motif lies at 179–182 (DEVH). The Helicase C-terminal domain maps to 374 to 551 (KILRKIKRCN…AFEKALKEAA (178 aa)).

Belongs to the DEAD box helicase family. DEAH subfamily.

It localises to the virion. It catalyses the reaction ATP + H2O = ADP + phosphate + H(+). The sequence is that of Putative ATP-dependent RNA helicase R563 from Acanthamoeba polyphaga mimivirus (APMV).